The following is a 239-amino-acid chain: Transcriptional regulatory protein DcuR (239 aa).

A Response regulatory domain is found at 3–121 (NVLIIDDDAM…RFEEALTGWR (119 aa)). Position 56 is a 4-aspartylphosphate (Asp-56). The segment at residues 181-200 (TDELANEVNISRVSCRKYLI) is a DNA-binding region (H-T-H motif).

Phosphorylated and activated by DcuS.

The protein resides in the cytoplasm. Its function is as follows. Member of the two-component regulatory system DcuR/DcuS. Involved in the C4-dicarboxylate-stimulated regulation of the genes encoding the anaerobic fumarate respiratory system (frdABCD; nuoAN; dcuB; dcuC; sdhCDAB; etc.). Weakly regulates the aerobic C4-dicarboxylate transporter dctA. The sequence is that of Transcriptional regulatory protein DcuR (dcuR) from Escherichia coli O6:H1 (strain CFT073 / ATCC 700928 / UPEC).